The chain runs to 358 residues: Chorismate synthase (358 aa).

NADP(+) is bound at residue arginine 46. FMN contacts are provided by residues 123–125, 235–236, glycine 275, 290–294, and arginine 316; these read RSS, NA, and KATPS.

This sequence belongs to the chorismate synthase family. In terms of assembly, homotetramer. It depends on FMNH2 as a cofactor.

It carries out the reaction 5-O-(1-carboxyvinyl)-3-phosphoshikimate = chorismate + phosphate. It functions in the pathway metabolic intermediate biosynthesis; chorismate biosynthesis; chorismate from D-erythrose 4-phosphate and phosphoenolpyruvate: step 7/7. Its function is as follows. Catalyzes the anti-1,4-elimination of the C-3 phosphate and the C-6 proR hydrogen from 5-enolpyruvylshikimate-3-phosphate (EPSP) to yield chorismate, which is the branch point compound that serves as the starting substrate for the three terminal pathways of aromatic amino acid biosynthesis. This reaction introduces a second double bond into the aromatic ring system. This is Chorismate synthase from Aliarcobacter butzleri (strain RM4018) (Arcobacter butzleri).